The sequence spans 151 residues: Large ribosomal subunit protein eL8 (151 aa).

Belongs to the eukaryotic ribosomal protein eL8 family. As to quaternary structure, part of the 50S ribosomal subunit. Probably part of the RNase P complex.

It is found in the cytoplasm. In terms of biological role, multifunctional RNA-binding protein that recognizes the K-turn motif in ribosomal RNA, the RNA component of RNase P, box H/ACA, box C/D and box C'/D' sRNAs. This chain is Large ribosomal subunit protein eL8, found in Pyrobaculum aerophilum (strain ATCC 51768 / DSM 7523 / JCM 9630 / CIP 104966 / NBRC 100827 / IM2).